The chain runs to 665 residues: Intraflagellar transport protein 70B (665 aa).

7 TPR repeats span residues 11–44 (DGEFTAVVYRLIRNARYAEAVQLLGGELQRSPRS), 45–78 (RAGLSLLGYCYYRLQEFALAAECYEQLGQLHPEL), 154–187 (TDGQINLGCLLYKEGQYEAACSKFFAALQASGYQ), 189–221 (DLSYNLALAYYSSRQYASALKHIAEIIERGIRQ), 393–424 (LTIQVQEARHNRDDEAIKKAVNEYDETMEKYI), 425–457 (PVLMAQAKIYWNLENYPMVEKIFRKSVEFCNDH), and 459–492 (VWKLNVAHVLFMQENKYKEAIGFYEPIVKKHYDN). The disordered stretch occupies residues 130–154 (PGSRSLVEQLPSREGGEESGGENET). Residues 508–535 (YIMTSQNEEAEELMRKIEKEEEQLSYDD) are a coiled coil. A TPR 8 repeat occupies 544 to 577 (CIVNLVIGTLYCAKGNYDFGISRVIKSLEPYNKK).

It belongs to the TTC30/dfy-1/fleer family. Interacts with the IFT B complex components IFT27, IFT46, IFT74, IFT52, IFT57, IFT80, IFT81 and IFT88. Interacts with KIF17.

It localises to the cell projection. Its subcellular location is the cilium. In terms of biological role, required for polyglutamylation of axonemal tubulin. Plays a role in anterograde intraflagellar transport (IFT), the process by which cilia precursors are transported from the base of the cilium to the site of their incorporation at the tip. The protein is Intraflagellar transport protein 70B of Homo sapiens (Human).